Consider the following 280-residue polypeptide: Transmembrane protein 119 (280 aa).

The signal sequence occupies residues 1–20; sequence MVPWFLLSLLLLARPVPGVA. Residues 21–91 lie on the Extracellular side of the membrane; the sequence is YSVSLPASFL…IMDFFRQYVM (71 aa). An O-linked (Xyl...) (chondroitin sulfate) serine glycan is attached at serine 36. The segment covering 38 to 47 has biased composition (low complexity); the sequence is EAEGSSASSP. The disordered stretch occupies residues 38 to 73; that stretch reads EAEGSSASSPSLPPPGTPAFSPTPERPQPTALDGPV. A helical transmembrane segment spans residues 92–112; the sequence is LIAVVGSLTFLIMFIVCAALI. Residues 113-280 lie on the Cytoplasmic side of the membrane; sequence TRQKHKATAY…CACNRVSPSV (168 aa). 2 disordered regions span residues 133-162 and 181-280; these read VDQR…EGLD and PARA…SPSV. Basic and acidic residues predominate over residues 148–162; sequence VPDRAPDSRHEEGLD. Residue serine 269 is modified to Phosphoserine.

As to quaternary structure, interacts with SMAD1, SMAD5 and RUNX2. In terms of tissue distribution, expressed in spermatocytes and spermatids in the developing testis (at protein level). Expressed in the brain, heart, lung, spleen, skeletal muscle, ovary, testis and epididymis. Predominantly expressed in osteoblasts.

The protein localises to the cell membrane. Its subcellular location is the cytoplasm. It localises to the endoplasmic reticulum membrane. It is found in the secreted. In terms of biological role, plays an important role in bone formation and normal bone mineralization. Promotes the differentiation of myoblasts into osteoblasts. May induce the commitment and differentiation of myoblasts into osteoblasts through an enhancement of BMP2 production and interaction with the BMP-RUNX2 pathway. Up-regulates the expression of ATF4 which plays a central role in osteoblast differentiation. Essential for normal spermatogenesis and late testicular differentiation. The polypeptide is Transmembrane protein 119 (Tmem119) (Mus musculus (Mouse)).